The primary structure comprises 261 residues: tRNA pseudouridine synthase A (261 aa).

Asp-51 acts as the Nucleophile in catalysis. Tyr-109 contributes to the substrate binding site.

This sequence belongs to the tRNA pseudouridine synthase TruA family. In terms of assembly, homodimer.

It catalyses the reaction uridine(38/39/40) in tRNA = pseudouridine(38/39/40) in tRNA. Its function is as follows. Formation of pseudouridine at positions 38, 39 and 40 in the anticodon stem and loop of transfer RNAs. The polypeptide is tRNA pseudouridine synthase A (Shewanella denitrificans (strain OS217 / ATCC BAA-1090 / DSM 15013)).